The chain runs to 717 residues: DNA ligase (717 aa).

NAD(+)-binding positions include 44–48 (DAEYD), 93–94 (SL), and E127. Catalysis depends on K129, which acts as the N6-AMP-lysine intermediate. R150, E186, K302, and K326 together coordinate NAD(+). 4 residues coordinate Zn(2+): C431, C434, C455, and C461. Positions 639-717 (TSGSPVVGKT…EDEWLELIGG (79 aa)) constitute a BRCT domain.

It belongs to the NAD-dependent DNA ligase family. LigA subfamily. Mg(2+) is required as a cofactor. Mn(2+) serves as cofactor.

The enzyme catalyses NAD(+) + (deoxyribonucleotide)n-3'-hydroxyl + 5'-phospho-(deoxyribonucleotide)m = (deoxyribonucleotide)n+m + AMP + beta-nicotinamide D-nucleotide.. Its function is as follows. DNA ligase that catalyzes the formation of phosphodiester linkages between 5'-phosphoryl and 3'-hydroxyl groups in double-stranded DNA using NAD as a coenzyme and as the energy source for the reaction. It is essential for DNA replication and repair of damaged DNA. In Rhizobium rhizogenes (strain K84 / ATCC BAA-868) (Agrobacterium radiobacter), this protein is DNA ligase.